The primary structure comprises 244 residues: Krueppel-like factor 9 (244 aa).

Disordered stretches follow at residues 26-51 (EHGGAPEAERLRLPEREVTKEHGDPG) and 79-143 (PSVC…EKRH). Positions 32-51 (EAERLRLPEREVTKEHGDPG) are enriched in basic and acidic residues. At S122 the chain carries Phosphoserine. Basic residues predominate over residues 134–143 (KGKHASEKRH). 3 consecutive C2H2-type zinc fingers follow at residues 143-167 (HKCPYSGCGKVYGKSSHLKAHYRVH), 173-197 (FPCTWPDCLKKFSRSDELTRHYRTH), and 203-225 (FRCPLCEKRFMRSDHLTKHARRH).

The protein belongs to the Sp1 C2H2-type zinc-finger protein family. In terms of assembly, interacts with ZZEF1.

The protein resides in the nucleus. Functionally, transcription factor that binds to GC box promoter elements. Selectively activates mRNA synthesis from genes containing tandem repeats of GC boxes but represses genes with a single GC box. Acts as an epidermal circadian transcription factor regulating keratinocyte proliferation. The protein is Krueppel-like factor 9 (Klf9) of Mus musculus (Mouse).